The sequence spans 316 residues: Alpha- and gamma-adaptin-binding protein p34 (316 aa).

The tract at residues 198 to 232 (ASAESCHSEQQEPSPTAERTESLPGHHSGACGSAG) is disordered. Low complexity predominate over residues 222-232 (GHHSGACGSAG). Phosphoserine is present on residues S311 and S312.

In terms of assembly, associated with AP-1 and AP-2 complexes.

The protein localises to the cytoplasm. The protein resides in the cytosol. May be involved in endocytic recycling of growth factor receptors such as EGFR. The protein is Alpha- and gamma-adaptin-binding protein p34 (Aagab) of Mus musculus (Mouse).